Reading from the N-terminus, the 323-residue chain is tRNA U34 carboxymethyltransferase (323 aa).

Carboxy-S-adenosyl-L-methionine contacts are provided by residues lysine 91, tryptophan 105, lysine 110, glycine 130, 180–181, methionine 196, tyrosine 200, and arginine 315; that span reads VE.

This sequence belongs to the class I-like SAM-binding methyltransferase superfamily. CmoB family. In terms of assembly, homotetramer.

It carries out the reaction carboxy-S-adenosyl-L-methionine + 5-hydroxyuridine(34) in tRNA = 5-carboxymethoxyuridine(34) in tRNA + S-adenosyl-L-homocysteine + H(+). In terms of biological role, catalyzes carboxymethyl transfer from carboxy-S-adenosyl-L-methionine (Cx-SAM) to 5-hydroxyuridine (ho5U) to form 5-carboxymethoxyuridine (cmo5U) at position 34 in tRNAs. The chain is tRNA U34 carboxymethyltransferase from Trichlorobacter lovleyi (strain ATCC BAA-1151 / DSM 17278 / SZ) (Geobacter lovleyi).